The following is a 303-amino-acid chain: Di/tripeptide transport system permease protein DppC (303 aa).

7 helical membrane passes run 33–53 (ALGGLLFMLLIVFCALFAPWV), 103–123 (LLIGLSSVVISLIPGILLGLL), 131–151 (AGPLIMRLMDIMLALPSLLLA), 152–172 (VAIVAILGPGLINTVIAIAIV), 202–222 (AGTLRLMFVCVLPNCMAPLIV), 225–245 (TLSFSSAILDAAALGFLGLGV), and 267–287 (WWVVSLPGLTILLSVLAINLM). In terms of domain architecture, ABC transmembrane type-1 spans 99-288 (ARLSLLIGLS…LSVLAINLMG (190 aa)).

This sequence belongs to the binding-protein-dependent transport system permease family. OppBC subfamily. In terms of assembly, the complex is composed of two ATP-binding proteins (DppD and DppF), two transmembrane proteins (DppB and DppC) and a solute-binding protein (DppA1-A5). Five orthologous SBPs (DppA1-A5) are present in P.aeruginosa, which increases the substrate specificity of the DppBCDF transporter.

It localises to the cell inner membrane. Part of the ABC transporter DppABCDF involved in the uptake of various di/tripeptides. Is also involved in the uptake of phaseolotoxin, a toxic tripeptide inhibiting the enzyme ornithine carbamoyltransferase. Responsible for the translocation of the substrate across the membrane. This is Di/tripeptide transport system permease protein DppC from Pseudomonas aeruginosa (strain UCBPP-PA14).